The primary structure comprises 182 residues: Large ribosomal subunit protein uL5 (182 aa).

It belongs to the universal ribosomal protein uL5 family. As to quaternary structure, part of the 50S ribosomal subunit; part of the 5S rRNA/L5/L18/L25 subcomplex. Contacts the 5S rRNA and the P site tRNA. Forms a bridge to the 30S subunit in the 70S ribosome.

Its function is as follows. This is one of the proteins that bind and probably mediate the attachment of the 5S RNA into the large ribosomal subunit, where it forms part of the central protuberance. In the 70S ribosome it contacts protein S13 of the 30S subunit (bridge B1b), connecting the 2 subunits; this bridge is implicated in subunit movement. Contacts the P site tRNA; the 5S rRNA and some of its associated proteins might help stabilize positioning of ribosome-bound tRNAs. The sequence is that of Large ribosomal subunit protein uL5 from Coxiella burnetii (strain CbuK_Q154) (Coxiella burnetii (strain Q154)).